The sequence spans 131 residues: Large ribosomal subunit protein bL17 (131 aa).

This sequence belongs to the bacterial ribosomal protein bL17 family. Part of the 50S ribosomal subunit. Contacts protein L32.

In Burkholderia multivorans (strain ATCC 17616 / 249), this protein is Large ribosomal subunit protein bL17.